The chain runs to 504 residues: Maturase K (504 aa).

Belongs to the intron maturase 2 family. MatK subfamily.

It localises to the plastid. Its subcellular location is the chloroplast. In terms of biological role, usually encoded in the trnK tRNA gene intron. Probably assists in splicing its own and other chloroplast group II introns. This is Maturase K from Quercus robur (English oak).